A 269-amino-acid chain; its full sequence is Phosphonates import ATP-binding protein PhnC (269 aa).

The ABC transporter domain maps to 8–251; that stretch reads IHLYGASLRH…LLDALYANEQ (244 aa). Residue 40-47 coordinates ATP; that stretch reads GPSGAGKS.

Belongs to the ABC transporter superfamily. Phosphonates importer (TC 3.A.1.9.1) family. In terms of assembly, the complex is composed of two ATP-binding proteins (PhnC), two transmembrane proteins (PhnE) and a solute-binding protein (PhnD).

It localises to the cell inner membrane. It carries out the reaction phosphonate(out) + ATP + H2O = phosphonate(in) + ADP + phosphate + H(+). Functionally, part of the ABC transporter complex PhnCDE involved in phosphonates import. Responsible for energy coupling to the transport system. In Pseudomonas putida (strain ATCC 47054 / DSM 6125 / CFBP 8728 / NCIMB 11950 / KT2440), this protein is Phosphonates import ATP-binding protein PhnC.